The primary structure comprises 402 residues: Arginine deiminase (402 aa).

The active-site Amidino-cysteine intermediate is the Cys-392.

It belongs to the arginine deiminase family.

It is found in the cytoplasm. It carries out the reaction L-arginine + H2O = L-citrulline + NH4(+). Its pathway is amino-acid degradation; L-arginine degradation via ADI pathway; carbamoyl phosphate from L-arginine: step 1/2. This Mycobacterium bovis (strain ATCC BAA-935 / AF2122/97) protein is Arginine deiminase (arcA).